The sequence spans 121 residues: Small ribosomal subunit protein uS13 (121 aa).

Residues 94–121 (RGLPVRGQSTKNNARTRKGPKRTVGAKR) form a disordered region. Over residues 107–121 (ARTRKGPKRTVGAKR) the composition is skewed to basic residues.

The protein belongs to the universal ribosomal protein uS13 family. Part of the 30S ribosomal subunit. Forms a loose heterodimer with protein S19. Forms two bridges to the 50S subunit in the 70S ribosome.

Functionally, located at the top of the head of the 30S subunit, it contacts several helices of the 16S rRNA. In the 70S ribosome it contacts the 23S rRNA (bridge B1a) and protein L5 of the 50S subunit (bridge B1b), connecting the 2 subunits; these bridges are implicated in subunit movement. Contacts the tRNAs in the A and P-sites. The sequence is that of Small ribosomal subunit protein uS13 from Natranaerobius thermophilus (strain ATCC BAA-1301 / DSM 18059 / JW/NM-WN-LF).